A 121-amino-acid chain; its full sequence is UPF0102 protein HRM2_30940 (121 aa).

It belongs to the UPF0102 family.

The protein is UPF0102 protein HRM2_30940 of Desulforapulum autotrophicum (strain ATCC 43914 / DSM 3382 / VKM B-1955 / HRM2) (Desulfobacterium autotrophicum).